A 469-amino-acid polypeptide reads, in one-letter code: 3-isopropylmalate dehydratase large subunit (469 aa).

Cys350, Cys410, and Cys413 together coordinate [4Fe-4S] cluster.

The protein belongs to the aconitase/IPM isomerase family. LeuC type 1 subfamily. Heterodimer of LeuC and LeuD. Requires [4Fe-4S] cluster as cofactor.

The enzyme catalyses (2R,3S)-3-isopropylmalate = (2S)-2-isopropylmalate. The protein operates within amino-acid biosynthesis; L-leucine biosynthesis; L-leucine from 3-methyl-2-oxobutanoate: step 2/4. In terms of biological role, catalyzes the isomerization between 2-isopropylmalate and 3-isopropylmalate, via the formation of 2-isopropylmaleate. This chain is 3-isopropylmalate dehydratase large subunit, found in Brucella anthropi (strain ATCC 49188 / DSM 6882 / CCUG 24695 / JCM 21032 / LMG 3331 / NBRC 15819 / NCTC 12168 / Alc 37) (Ochrobactrum anthropi).